The primary structure comprises 476 residues: Bifunctional protein HldE (476 aa).

Residues 1-319 form a ribokinase region; the sequence is MKVSLPAFEK…RALSVNHGES (319 aa). Residue 195–198 participates in ATP binding; the sequence is NMGE. Residue Asp-264 is part of the active site. Residues 345–476 are cytidylyltransferase; that stretch reads MTNGCFDILH…SIIENIMANQ (132 aa).

It in the N-terminal section; belongs to the carbohydrate kinase PfkB family. The protein in the C-terminal section; belongs to the cytidylyltransferase family. As to quaternary structure, homodimer.

It carries out the reaction D-glycero-beta-D-manno-heptose 7-phosphate + ATP = D-glycero-beta-D-manno-heptose 1,7-bisphosphate + ADP + H(+). It catalyses the reaction D-glycero-beta-D-manno-heptose 1-phosphate + ATP + H(+) = ADP-D-glycero-beta-D-manno-heptose + diphosphate. Its pathway is nucleotide-sugar biosynthesis; ADP-L-glycero-beta-D-manno-heptose biosynthesis; ADP-L-glycero-beta-D-manno-heptose from D-glycero-beta-D-manno-heptose 7-phosphate: step 1/4. The protein operates within nucleotide-sugar biosynthesis; ADP-L-glycero-beta-D-manno-heptose biosynthesis; ADP-L-glycero-beta-D-manno-heptose from D-glycero-beta-D-manno-heptose 7-phosphate: step 3/4. Functionally, catalyzes the phosphorylation of D-glycero-D-manno-heptose 7-phosphate at the C-1 position to selectively form D-glycero-beta-D-manno-heptose-1,7-bisphosphate. Its function is as follows. Catalyzes the ADP transfer from ATP to D-glycero-beta-D-manno-heptose 1-phosphate, yielding ADP-D-glycero-beta-D-manno-heptose. This Shewanella sediminis (strain HAW-EB3) protein is Bifunctional protein HldE.